The sequence spans 191 residues: MTQQITLIKDKILSDNYFTLHNITYDLTRKDGEVIRHKREVYDRGNGATILLYNAKKKTVVLIRQFRVATWVNGNESGQLIETCAGLLDNDEPEVCIRKEAIEETGYEVGEVRKLFELYMSPGGVTELIHFFIAEYSDSQRANAGGGVEDEDIEVLELPFSQALEMIKTGEIRDGKTVLLLNYLQTSHLMD.

Residues Tyr-17, 38 to 40 (KRE), Arg-67, and 85 to 87 (AGL) each bind GDP-alpha-D-mannose. Residues 43-180 (DRGNGATILL…EIRDGKTVLL (138 aa)) enclose the Nudix hydrolase domain. The Mg(2+) site is built by Ala-85, Glu-100, and Glu-104. The Nudix box motif lies at 86–106 (GLLDNDEPEVCIRKEAIEETG). GDP-alpha-D-mannose contacts are provided by residues Glu-104, Glu-127, 150–151 (DE), and Lys-176. A Mg(2+)-binding site is contributed by Glu-151.

This sequence belongs to the Nudix hydrolase family. NudK subfamily. In terms of assembly, homodimer. Mg(2+) serves as cofactor.

The enzyme catalyses GDP-alpha-D-mannose + H2O = alpha-D-mannose 1-phosphate + GMP + 2 H(+). Functionally, nucleoside diphosphate sugar hydrolase that hydrolyzes GDP-mannose as its preferred substrate, yielding GMP and mannose-1-phosphate. In Escherichia coli (strain SMS-3-5 / SECEC), this protein is GDP-mannose pyrophosphatase (nudK).